Reading from the N-terminus, the 295-residue chain is Tyrosine recombinase XerD (295 aa).

In terms of domain architecture, Core-binding (CB) spans 1 to 85 (METIIEEYLK…TIRSFHQFAL (85 aa)). Residues 106–289 (KLPDVLDVEE…SKTQIRQMYN (184 aa)) enclose the Tyr recombinase domain. Residues Arg146, Lys170, His241, Arg244, and His267 contribute to the active site. Catalysis depends on Tyr276, which acts as the O-(3'-phospho-DNA)-tyrosine intermediate.

It belongs to the 'phage' integrase family. XerD subfamily. In terms of assembly, forms a cyclic heterotetrameric complex composed of two molecules of XerC and two molecules of XerD.

It localises to the cytoplasm. Functionally, site-specific tyrosine recombinase, which acts by catalyzing the cutting and rejoining of the recombining DNA molecules. The XerC-XerD complex is essential to convert dimers of the bacterial chromosome into monomers to permit their segregation at cell division. It also contributes to the segregational stability of plasmids. In Staphylococcus haemolyticus (strain JCSC1435), this protein is Tyrosine recombinase XerD.